Consider the following 448-residue polypeptide: tRNA(Ile)-lysidine synthase (448 aa).

Residue 29–34 participates in ATP binding; sequence SGGVDS.

The protein belongs to the tRNA(Ile)-lysidine synthase family.

It localises to the cytoplasm. It carries out the reaction cytidine(34) in tRNA(Ile2) + L-lysine + ATP = lysidine(34) in tRNA(Ile2) + AMP + diphosphate + H(+). In terms of biological role, ligates lysine onto the cytidine present at position 34 of the AUA codon-specific tRNA(Ile) that contains the anticodon CAU, in an ATP-dependent manner. Cytidine is converted to lysidine, thus changing the amino acid specificity of the tRNA from methionine to isoleucine. The chain is tRNA(Ile)-lysidine synthase from Azoarcus sp. (strain BH72).